We begin with the raw amino-acid sequence, 198 residues long: Imidazoleglycerol-phosphate dehydratase (198 aa).

This sequence belongs to the imidazoleglycerol-phosphate dehydratase family.

Its subcellular location is the cytoplasm. The enzyme catalyses D-erythro-1-(imidazol-4-yl)glycerol 3-phosphate = 3-(imidazol-4-yl)-2-oxopropyl phosphate + H2O. It functions in the pathway amino-acid biosynthesis; L-histidine biosynthesis; L-histidine from 5-phospho-alpha-D-ribose 1-diphosphate: step 6/9. The sequence is that of Imidazoleglycerol-phosphate dehydratase from Streptomyces griseus subsp. griseus (strain JCM 4626 / CBS 651.72 / NBRC 13350 / KCC S-0626 / ISP 5235).